Consider the following 501-residue polypeptide: 4,4'-diapophytoene desaturase (4,4'-diaponeurosporene-forming) (501 aa).

5-17 is a binding site for FAD; sequence VVGAGVTGLAAAA.

The protein belongs to the carotenoid/retinoid oxidoreductase family. CrtN subfamily.

It catalyses the reaction 15-cis-4,4'-diapophytoene + 3 FAD + 3 H(+) = all-trans-4,4'-diaponeurosporene + 3 FADH2. It participates in carotenoid biosynthesis; staphyloxanthin biosynthesis; staphyloxanthin from farnesyl diphosphate: step 2/5. Functionally, involved in the biosynthesis of the yellow-orange carotenoid staphyloxanthin, which plays a role in the virulence via its protective function against oxidative stress. Catalyzes three successive dehydrogenation reactions that lead to the introduction of three double bonds into 4,4'-diapophytoene (dehydrosqualene), with 4,4'-diapophytofluene and 4,4'-diapo-zeta-carotene as intermediates, and 4,4'-diaponeurosporene (the major deep-yellow pigment in staphylococci strains) as the end product. The chain is 4,4'-diapophytoene desaturase (4,4'-diaponeurosporene-forming) from Staphylococcus haemolyticus (strain JCSC1435).